A 345-amino-acid chain; its full sequence is Holliday junction branch migration complex subunit RuvB (345 aa).

The segment at 1–22 (MIETDALSGGTPRRLVTQQPLS) is disordered. Residues 4–193 (TDALSGGTPR…FGIVARLEFY (190 aa)) are large ATPase domain (RuvB-L). ATP contacts are provided by residues leucine 32, arginine 33, glycine 74, lysine 77, threonine 78, threonine 79, 140 to 142 (EDY), arginine 183, tyrosine 193, and arginine 230. Threonine 78 serves as a coordination point for Mg(2+). A small ATPAse domain (RuvB-S) region spans residues 194–264 (TPEELTRIVR…VADAALSMLD (71 aa)). The head domain (RuvB-H) stretch occupies residues 267-345 (PAGLDVMDRK…HFGFVPPERV (79 aa)). Residues arginine 322 and arginine 327 each contribute to the DNA site.

This sequence belongs to the RuvB family. In terms of assembly, homohexamer. Forms an RuvA(8)-RuvB(12)-Holliday junction (HJ) complex. HJ DNA is sandwiched between 2 RuvA tetramers; dsDNA enters through RuvA and exits via RuvB. An RuvB hexamer assembles on each DNA strand where it exits the tetramer. Each RuvB hexamer is contacted by two RuvA subunits (via domain III) on 2 adjacent RuvB subunits; this complex drives branch migration. In the full resolvosome a probable DNA-RuvA(4)-RuvB(12)-RuvC(2) complex forms which resolves the HJ.

The protein resides in the cytoplasm. It catalyses the reaction ATP + H2O = ADP + phosphate + H(+). Its function is as follows. The RuvA-RuvB-RuvC complex processes Holliday junction (HJ) DNA during genetic recombination and DNA repair, while the RuvA-RuvB complex plays an important role in the rescue of blocked DNA replication forks via replication fork reversal (RFR). RuvA specifically binds to HJ cruciform DNA, conferring on it an open structure. The RuvB hexamer acts as an ATP-dependent pump, pulling dsDNA into and through the RuvAB complex. RuvB forms 2 homohexamers on either side of HJ DNA bound by 1 or 2 RuvA tetramers; 4 subunits per hexamer contact DNA at a time. Coordinated motions by a converter formed by DNA-disengaged RuvB subunits stimulates ATP hydrolysis and nucleotide exchange. Immobilization of the converter enables RuvB to convert the ATP-contained energy into a lever motion, pulling 2 nucleotides of DNA out of the RuvA tetramer per ATP hydrolyzed, thus driving DNA branch migration. The RuvB motors rotate together with the DNA substrate, which together with the progressing nucleotide cycle form the mechanistic basis for DNA recombination by continuous HJ branch migration. Branch migration allows RuvC to scan DNA until it finds its consensus sequence, where it cleaves and resolves cruciform DNA. This chain is Holliday junction branch migration complex subunit RuvB, found in Laribacter hongkongensis (strain HLHK9).